We begin with the raw amino-acid sequence, 637 residues long: MHLRIHARRSPPRRPAWTLGIWFLFWGCIVSSVWSSSNVASSSSTSSSPGSHSQHEHHFHGSKHHSVPISIYRSPVSLRGGHAGATYIFGKSGGLILYTWPANDRPSTRSDRLAVGFSTTVKDGILVRIDSAPGLGDFLQLHIEQGKIGVVFNIGTVDISIKEERTPVNDGKYHVVRFTRNGGNATLQVDNWPVNEHYPTGRQLTIFNTQAQIAIGGKDKGRLFQGQLSGLYYDGLKVLNMAAENNPNIKINGSVRLVGEVPSILGTTQTTSMPPEMSTTVMETTTTMATTTTRKNRSTASIQPTSDDLVSSAECSSDDEDFVECEPSTGGELVIPLLVEDPLATPPIATRAPSITLPPTFRPLLTIIETTKDSLSMTSEAGLPCLSDQGSDGCDDDGLVISGYGSGETFDSNLPPTDDEDFYTTFSLVTDKSLSTSIFEGGYKAHAPKWESKDFRPNKVSETSRTTTTSLSPELIRFTASSSSGMVPKLPAGKMNNRDLKPQPDIVLLPLPTAYELDSTKLKSPLITSPMFRNVPTANPTEPGIRRVPGASEVIRESSSTTGMVVGIVAAAALCILILLYAMYKYRNRDEGSYQVDETRNYISNSAQSNGTLMKEKQQSSKSGHKKQKNKDREYYV.

The signal sequence occupies residues 1–35; the sequence is MHLRIHARRSPPRRPAWTLGIWFLFWGCIVSSVWS. Topologically, residues 36–562 are extracellular; it reads SSNVASSSST…EVIRESSSTT (527 aa). Positions 43–52 are enriched in low complexity; the sequence is SSTSSSPGSH. A disordered region spans residues 43–65; the sequence is SSTSSSPGSHSQHEHHFHGSKHH. The segment covering 55 to 65 has biased composition (basic residues); it reads HEHHFHGSKHH. The 171-residue stretch at 85–255 folds into the Laminin G-like domain; the sequence is ATYIFGKSGG…NPNIKINGSV (171 aa). Residues D137 and I154 each contribute to the Ca(2+) site. An N-linked (GlcNAc...) asparagine glycan is attached at N184. Ca(2+) contacts are provided by I206 and N208. 2 N-linked (GlcNAc...) asparagine glycosylation sites follow: N252 and N296. Residues 289 to 310 form a disordered region; that stretch reads ATTTTRKNRSTASIQPTSDDLV. Residues 298 to 310 show a composition bias toward polar residues; the sequence is STASIQPTSDDLV. S312 carries an O-linked (Xyl...) (heparan sulfate) serine glycan. A helical transmembrane segment spans residues 563-583; it reads GMVVGIVAAAALCILILLYAM. Over 584 to 637 the chain is Cytoplasmic; that stretch reads YKYRNRDEGSYQVDETRNYISNSAQSNGTLMKEKQQSSKSGHKKQKNKDREYYV. The segment at 605–637 is disordered; that stretch reads NSAQSNGTLMKEKQQSSKSGHKKQKNKDREYYV.

The protein belongs to the neurexin family. In terms of assembly, weakly interacts with CBLN1 and CBLN2. Very weak binding, if any, to CBLN4. Specific isoforms bind neuroligins NLGN1, NLGN2 and NLGN3. Interacts with CLSTN3. Post-translationally, processed by alpha-secretase leading to the formation of an extracellular soluble protein as well as a C-terminal membrane-embedded fragment (CTF). Proteolysis of these CTFs by gamma-secretase releases intracellular domains (ICDs) and extracellular peptides. O-glycosylated; contains heparan sulfate. Heparan sulfate attachment is required for synapse development by mediating interactions with neuroligins. Expressed in the blood vessel walls (at protein level).

The protein resides in the presynaptic cell membrane. Its function is as follows. Neuronal cell surface protein that may be involved in cell recognition and cell adhesion. May mediate intracellular signaling. Functions as part of a trans-synaptic complex by binding to cerebellins and postsynaptic GRID1. This interaction helps regulate the activity of NMDA and AMPA receptors at hippocampal synapses without affecting synapse formation. NRXN3B-CBLN2-GRID1 complex transduce presynaptic signals into postsynaptic AMPAR response. The sequence is that of Neurexin-3-beta from Homo sapiens (Human).